We begin with the raw amino-acid sequence, 208 residues long: Outer-membrane lipoprotein LolB (208 aa).

Positions 1-23 are cleaved as a signal peptide; sequence MKPIQKLSLFRLLPLSCVLLLTA. The N-palmitoyl cysteine moiety is linked to residue C24. Residue C24 is the site of S-diacylglycerol cysteine attachment.

It belongs to the LolB family. Monomer.

It localises to the cell outer membrane. Plays a critical role in the incorporation of lipoproteins in the outer membrane after they are released by the LolA protein. The polypeptide is Outer-membrane lipoprotein LolB (Photorhabdus laumondii subsp. laumondii (strain DSM 15139 / CIP 105565 / TT01) (Photorhabdus luminescens subsp. laumondii)).